The primary structure comprises 458 residues: MGSIQIIFAAYCVVLCVLQMLVLSSEQFTITGLERPVLAPLGGILELSCQLSPPQNAQQMEIRWFRNRYTEPVYLYRNGKDLHGETISKYVERTELLKHDIGKGKVTLRVFKVTVDDDGSYHCVFKDGIFYEEHITEVKVTATSSDIKIIMHPPNIKGVMLECHSRGWFPQPHMEWRDSNGQVIPATSKSQSQDENKLFNMTMNLFADVGLHQIVTCYIQNLLTHQEESISIVLTGDLFSWKIDWILILSIIACVMIPYSMTSYLQQHLIHGSCSQRSHHWRKNAMVCMSSVIAIIGSMLILHLKQRVPISDQHFELDTLYLEDISVILCVVIVFNLKLNLLTYYRLERKYDGCTPGCKACFYILKIIIIILPFVFTFGCYNAIFLKYHQLQKKVSIPDPLYYFYTSWLVNMEMLGVFLVFFPTFINLIEFSQFIKTVPKPIWLCQENMREDDAIRHR.

An N-terminal signal peptide occupies residues 1–24 (MGSIQIIFAAYCVVLCVLQMLVLS). Residues 25–237 (SEQFTITGLE…ESISIVLTGD (213 aa)) are Extracellular-facing. The 116-residue stretch at 26–141 (EQFTITGLER…EEHITEVKVT (116 aa)) folds into the Ig-like V-type domain. 2 disulfide bridges follow: cysteine 49–cysteine 123 and cysteine 163–cysteine 217. The 90-residue stretch at 142-231 (ATSSDIKIIM…LLTHQEESIS (90 aa)) folds into the Ig-like C1-type domain. Asparagine 200 carries an N-linked (GlcNAc...) asparagine glycan. The helical transmembrane segment at 238-258 (LFSWKIDWILILSIIACVMIP) threads the bilayer. At 259–283 (YSMTSYLQQHLIHGSCSQRSHHWRK) the chain is on the cytoplasmic side. The chain crosses the membrane as a helical span at residues 284–304 (NAMVCMSSVIAIIGSMLILHL). The Extracellular portion of the chain corresponds to 305–324 (KQRVPISDQHFELDTLYLED). The chain crosses the membrane as a helical span at residues 325 to 345 (ISVILCVVIVFNLKLNLLTYY). Topologically, residues 346-359 (RLERKYDGCTPGCK) are cytoplasmic. The chain crosses the membrane as a helical span at residues 360 to 380 (ACFYILKIIIIILPFVFTFGC). Over 381 to 414 (YNAIFLKYHQLQKKVSIPDPLYYFYTSWLVNMEM) the chain is Extracellular. Residues 415-435 (LGVFLVFFPTFINLIEFSQFI) form a helical membrane-spanning segment. The Cytoplasmic portion of the chain corresponds to 436–458 (KTVPKPIWLCQENMREDDAIRHR).

It belongs to the SKINT family. In terms of tissue distribution, expressed in skin and thymus.

Its subcellular location is the membrane. Its function is as follows. May act by engaging a cell surface molecule on immature T-cells in the embryonic thymus. This Mus musculus (Mouse) protein is Selection and upkeep of intraepithelial T-cells protein 3 (Skint3).